A 289-amino-acid polypeptide reads, in one-letter code: MAGRYDPNPFDEEQVNPFSNPRSAASATNSRPAPLNPDRADYNYGFGPTVDIPLDTSTDGKKKERDLQAKEAELRKREQEVRRKEEAIARAGIVIEEKNWPPFFPIIHHDITNEIPIHLRTLQYVAFFSLLGLVLCLTWNVVSVTAAWIKGEGVKIWFLAIIYFIAGVPGAYALWYRPLYRAFRTDSAIKFGWFFMFYLLHIGFCILAAVAPPIVFKGKSLTGILSAIDVVGDYTLVGIFYFIGFGFFCLETLISIWVIQQVYMHFRGGGKTAEMKREAALGAMGAALR.

Residues 1 to 65 (MAGRYDPNPF…TSTDGKKKER (65 aa)) form a disordered region. The Cytoplasmic portion of the chain corresponds to 1-123 (MAGRYDPNPF…EIPIHLRTLQ (123 aa)). A compositionally biased stretch (polar residues) spans 16–31 (NPFSNPRSAASATNSR). Positions 59–98 (DGKKKERDLQAKEAELRKREQEVRRKEEAIARAGIVIEEK) form a coiled coil. A run of 4 helical transmembrane segments spans residues 124–144 (YVAFFSLLGLVLCLTWNVVSV), 156–176 (IWFLAIIYFIAGVPGAYALWY), 191–211 (FGWFFMFYLLHIGFCILAAVA), and 239–259 (IFYFIGFGFFCLETLISIWVI). Residues 260–289 (QQVYMHFRGGGKTAEMKREAALGAMGAALR) lie on the Cytoplasmic side of the membrane.

The protein belongs to the SCAMP family.

It localises to the cell membrane. It is found in the cytoplasmic vesicle. Its subcellular location is the secretory vesicle membrane. Its function is as follows. Probably involved in membrane trafficking. The polypeptide is Secretory carrier-associated membrane protein (PSAM2) (Pisum sativum (Garden pea)).